The following is a 397-amino-acid chain: Elongation factor Tu-2 (397 aa).

One can recognise a tr-type G domain in the interval 10 to 206 (KPHVNIGTIG…AVDEFVPEPV (197 aa)). Residues 19 to 26 (GHIDHGKT) are G1. Residue 19–26 (GHIDHGKT) participates in GTP binding. Thr-26 provides a ligand contact to Mg(2+). A G2 region spans residues 62-66 (GITIS). The tract at residues 83–86 (DCPG) is G3. GTP-binding positions include 83-87 (DCPGH) and 138-141 (NKTD). Positions 138-141 (NKTD) are G4. The tract at residues 176-178 (SAL) is G5.

The protein belongs to the TRAFAC class translation factor GTPase superfamily. Classic translation factor GTPase family. EF-Tu/EF-1A subfamily. As to quaternary structure, monomer.

It localises to the cytoplasm. It catalyses the reaction GTP + H2O = GDP + phosphate + H(+). Functionally, GTP hydrolase that promotes the GTP-dependent binding of aminoacyl-tRNA to the A-site of ribosomes during protein biosynthesis. This Streptomyces ramocissimus protein is Elongation factor Tu-2.